The primary structure comprises 113 residues: MHELSIATDLINTALETAKQNNAREVISITVEIGELALINPEQLQFMYQVLTEENLLKGSELIIINVPAVAECQCGYKGPVPDKTTCACPNCGLTMRAVEGRDICLKTMEIEV.

His2 is a Ni(2+) binding site. Zn(2+) contacts are provided by Cys73, Cys75, Cys89, and Cys92.

The protein belongs to the HypA/HybF family.

In terms of biological role, involved in the maturation of [NiFe] hydrogenases. Required for nickel insertion into the metal center of the hydrogenase. This chain is Hydrogenase maturation factor HypA, found in Methanocella arvoryzae (strain DSM 22066 / NBRC 105507 / MRE50).